A 549-amino-acid chain; its full sequence is DDB1- and CUL4-associated factor 11 (549 aa).

Low complexity predominate over residues 1-24 (MGSRNSSSAGSGSLEPSEGLSRRG). The segment at 1–40 (MGSRNSSSAGSGSLEPSEGLSRRGAGLRRSEEEEEEDEDV) is disordered. Residues Ser73 and Ser75 each carry the phosphoserine modification. Over residues 80 to 89 (DSAWDGRLGD) the composition is skewed to basic and acidic residues. A disordered region spans residues 80–100 (DSAWDGRLGDRYNPPVDATPD). 7 WD repeats span residues 170-210 (TYSQ…HKFK), 216-258 (DVGW…TALD), 263-302 (ERRF…RTLQ), 305-345 (SHED…EDDP), 353-392 (GHQD…SREG), 435-480 (GVLH…KKLT), and 481-520 (NHKA…YFQD).

As to quaternary structure, interacts with DDB1 and CUL4A.

The protein operates within protein modification; protein ubiquitination. Its function is as follows. May function as a substrate receptor for CUL4-DDB1 E3 ubiquitin-protein ligase complex. This chain is DDB1- and CUL4-associated factor 11 (Dcaf11), found in Rattus norvegicus (Rat).